The sequence spans 396 residues: MTRLNPYFGEFGGMYVPQILMPALIQLEDAFVSAQSDPAFQAEFSDLLTNYAGRPTPLTLCRNLTAGTRTKLYLKREDLLHGGAHKTNQVLGQALLAKRMGKTEIIAETGAGQHGVASALSSALLGLKCRIYMGAKDIERQSPNVFRMRLMGAEVIPVHSGSSTLKDACNEALRDWSDSYERAHYMLGTAAGPHPFPTIVREFQRMIGEETRAQLQEHEQRLPDAVIACVGGGSNAIGMFADFIDEPAVRLIGVEPGGLGIETRQHGASLKHGRTGIYFGMKSPMMQSAEGQIEESYSISAGLDFPSVGPQHAYLDSIGRAEYISATDEEALDAFRRLSRHEGIIPALESSHALAHALRMIQAEPEKEQILVVNLSGRGDKDIFTVHDILKARGDI.

N6-(pyridoxal phosphate)lysine is present on Lys-86.

It belongs to the TrpB family. In terms of assembly, tetramer of two alpha and two beta chains. It depends on pyridoxal 5'-phosphate as a cofactor.

The enzyme catalyses (1S,2R)-1-C-(indol-3-yl)glycerol 3-phosphate + L-serine = D-glyceraldehyde 3-phosphate + L-tryptophan + H2O. Its pathway is amino-acid biosynthesis; L-tryptophan biosynthesis; L-tryptophan from chorismate: step 5/5. The beta subunit is responsible for the synthesis of L-tryptophan from indole and L-serine. This chain is Tryptophan synthase beta chain, found in Sodalis glossinidius (strain morsitans).